A 195-amino-acid polypeptide reads, in one-letter code: Large ribosomal subunit protein bL9 (195 aa).

It belongs to the bacterial ribosomal protein bL9 family.

Functionally, binds to the 23S rRNA. The polypeptide is Large ribosomal subunit protein bL9 (Rhodopseudomonas palustris (strain TIE-1)).